Reading from the N-terminus, the 100-residue chain is NAD(P)H-quinone oxidoreductase subunit 4L, chloroplastic (100 aa).

3 consecutive transmembrane segments (helical) span residues 2 to 22 (ILQH…FGLI), 28 to 48 (VKIL…LVIF), and 61 to 81 (LFGL…LAIL).

Belongs to the complex I subunit 4L family. In terms of assembly, NDH is composed of at least 16 different subunits, 5 of which are encoded in the nucleus.

Its subcellular location is the plastid. It localises to the chloroplast thylakoid membrane. It catalyses the reaction a plastoquinone + NADH + (n+1) H(+)(in) = a plastoquinol + NAD(+) + n H(+)(out). It carries out the reaction a plastoquinone + NADPH + (n+1) H(+)(in) = a plastoquinol + NADP(+) + n H(+)(out). Functionally, NDH shuttles electrons from NAD(P)H:plastoquinone, via FMN and iron-sulfur (Fe-S) centers, to quinones in the photosynthetic chain and possibly in a chloroplast respiratory chain. The immediate electron acceptor for the enzyme in this species is believed to be plastoquinone. Couples the redox reaction to proton translocation, and thus conserves the redox energy in a proton gradient. This is NAD(P)H-quinone oxidoreductase subunit 4L, chloroplastic from Chara vulgaris (Common stonewort).